Consider the following 142-residue polypeptide: ATP synthase epsilon chain (142 aa).

This sequence belongs to the ATPase epsilon chain family. In terms of assembly, F-type ATPases have 2 components, CF(1) - the catalytic core - and CF(0) - the membrane proton channel. CF(1) has five subunits: alpha(3), beta(3), gamma(1), delta(1), epsilon(1). CF(0) has three main subunits: a, b and c.

It localises to the cell inner membrane. In terms of biological role, produces ATP from ADP in the presence of a proton gradient across the membrane. In Histophilus somni (strain 2336) (Haemophilus somnus), this protein is ATP synthase epsilon chain.